Reading from the N-terminus, the 69-residue chain is M-poneratoxin-Dq4e (69 aa).

The N-terminal stretch at 1–25 (MKLSAFTLAFALILMMAIMYNMAEA) is a signal peptide. The propeptide occupies 26–39 (AALADADADAEAIA).

As to expression, expressed by the venom gland.

It is found in the secreted. Its function is as follows. May have antimicrobial properties, like most ant linear peptides. In addition, when tested in vitro on the parasite Trypanosoma cruzi (responsible of the Chagas disease), is able to moderately reduce the number of the three forms (epimastigote, trypomastigote and amastigote) by inducing cell death through necrosis. This chain is M-poneratoxin-Dq4e, found in Dinoponera quadriceps (South American ant).